The chain runs to 86 residues: Centromere protein W (86 aa).

Belongs to the CENP-W/WIP1 family. Heterodimer with CENPT; this dimer coassembles with CENPS-CENPX heterodimers at centromeres to form the tetrameric CENP-T-W-S-X complex, which is a subcomplex of the large constitutive centromere-associated network (CCAN, also known as the interphase centromere complex or ICEN). Interacts with NPM1.

It localises to the nucleus. The protein localises to the chromosome. The protein resides in the centromere. It is found in the kinetochore. Its subcellular location is the nucleus matrix. It localises to the nucleolus. In terms of biological role, component of the CENPA-NAC (nucleosome-associated) complex, a complex that plays a central role in assembly of kinetochore proteins, mitotic progression and chromosome segregation. The CENPA-NAC complex recruits the CENPA-CAD (nucleosome distal) complex and may be involved in incorporation of newly synthesized CENPA into centromeres. Part of a nucleosome-associated complex that binds specifically to histone H3-containing nucleosomes at the centromere, as opposed to nucleosomes containing CENPA. Component of the heterotetrameric CENP-T-W-S-X complex that binds and supercoils DNA, and plays an important role in kinetochore assembly. CENPW has a fundamental role in kinetochore assembly and function. It is one of the inner kinetochore proteins, with most further proteins binding downstream. Required for normal chromosome organization and normal progress through mitosis. The sequence is that of Centromere protein W (Cenpw) from Mus musculus (Mouse).